Here is a 205-residue protein sequence, read N- to C-terminus: Colicin-E8 (205 aa).

2 disordered regions span residues 24 to 109 (AQTD…PDRI) and 136 to 187 (PELS…VYDM). 3 stretches are compositionally biased toward basic and acidic residues: residues 53–76 (QERR…ESKR), 88–99 (PVGDKWLDDAGK), and 159–178 (RNKD…DKPI). H173, H198, and H202 together coordinate Zn(2+).

This sequence belongs to the colicin/pyosin nuclease family.

Functionally, this plasmid-coded bactericidal protein is an endonuclease active on both single- and double-stranded DNA but with undefined specificity. Colicins are polypeptide toxins produced by and active against E.coli and closely related bacteria. In Escherichia coli, this protein is Colicin-E8 (col).